The following is a 255-amino-acid chain: F-box only protein 44 (255 aa).

The 48-residue stretch at 3–50 (VGNINELPENILLELFIHIPARQLLLRCRPVCSLWRDLIDLVTLWKRK) folds into the F-box domain. The region spanning 71 to 252 (FYFLRSLQRN…VTNSSITIGP (182 aa)) is the FBA domain.

In terms of assembly, part of a SCF (SKP1-cullin-F-box) protein ligase complex. Interacts with SKP1 and CUL1. As to expression, expressed in brain, liver, pancreas and adipose tissue (at protein level). Widely expressed.

Its function is as follows. Substrate-recognition component of the SCF (SKP1-CUL1-F-box protein)-type E3 ubiquitin ligase complex. The sequence is that of F-box only protein 44 (Fbxo44) from Mus musculus (Mouse).